A 1376-amino-acid chain; its full sequence is DNA-directed RNA polymerase subunit beta (1376 aa).

The span at 1357–1368 shows a compositional bias: polar residues; that stretch reads NSKTGRQTNPGT. The disordered stretch occupies residues 1357 to 1376; the sequence is NSKTGRQTNPGTRENLPAAE.

It belongs to the RNA polymerase beta chain family. As to quaternary structure, the RNAP catalytic core consists of 2 alpha, 1 beta, 1 beta' and 1 omega subunit. When a sigma factor is associated with the core the holoenzyme is formed, which can initiate transcription.

The catalysed reaction is RNA(n) + a ribonucleoside 5'-triphosphate = RNA(n+1) + diphosphate. DNA-dependent RNA polymerase catalyzes the transcription of DNA into RNA using the four ribonucleoside triphosphates as substrates. This is DNA-directed RNA polymerase subunit beta from Azorhizobium caulinodans (strain ATCC 43989 / DSM 5975 / JCM 20966 / LMG 6465 / NBRC 14845 / NCIMB 13405 / ORS 571).